The following is a 66-amino-acid chain: Cold shock-like protein CspLA (66 aa).

The region spanning 4–63 (GTVKWFNAEKGFGFIERENGDDVFVHFSAIQGDGFKSLDEGQAVTFDVEEGQRGPQAANV) is the CSD domain.

In terms of assembly, homodimer.

It localises to the cytoplasm. The protein is Cold shock-like protein CspLA (cspLA) of Listeria innocua serovar 6a (strain ATCC BAA-680 / CLIP 11262).